A 260-amino-acid polypeptide reads, in one-letter code: Fibronectin type III domain-containing protein 5 (260 aa).

The disordered stretch occupies residues 1–56 (MQAARGGAGRPERPGRPGRGPERERERPPGAGAASPCAAPGLPAGGATIHPGSPSA). The span at 10–28 (RPERPGRPGRGPERERERP) shows a compositional bias: basic and acidic residues. Positions 29 to 56 (PGAGAASPCAAPGLPAGGATIHPGSPSA) are enriched in low complexity. The Fibronectin type-III domain occupies 84 to 175 (APVNVTVRHL…EPVLFKTPRE (92 aa)). N-linked (GlcNAc...) asparagine glycosylation is found at N87 and N132. A helical membrane pass occupies residues 201–221 (GEVLIIVVVLFMWAGVIALFC). Residues 230–241 (NEPNNNKEKTKS) show a composition bias toward basic and acidic residues. The segment at 230-260 (NEPNNNKEKTKSASETSTPEHQGGGLLRSKI) is disordered. The segment covering 251–260 (QGGGLLRSKI) has biased composition (gly residues). The short motif at 258–260 (SKI) is the Microbody targeting signal element.

In terms of assembly, dimer; may exist in other oligomeric forms. Post-translationally, the extracellular domain is cleaved and released from the cell membrane. In terms of processing, N-Glycosylated. In terms of tissue distribution, widely expressed, with highest levels in heart. Very low expression, if any, in colon, pancreas and spleen.

Its subcellular location is the cell membrane. The protein resides in the peroxisome membrane. It is found in the secreted. In terms of biological role, mediates beneficial effects of muscular exercise. Induces browning of white adipose tissue by stimulating UCP1 expression, at least in part, via the nuclear receptor PPARA. In Homo sapiens (Human), this protein is Fibronectin type III domain-containing protein 5 (FNDC5).